The following is an 83-amino-acid chain: Small ribosomal subunit protein bS20 (83 aa).

This sequence belongs to the bacterial ribosomal protein bS20 family.

Functionally, binds directly to 16S ribosomal RNA. This chain is Small ribosomal subunit protein bS20, found in Amoebophilus asiaticus (strain 5a2).